Here is a 513-residue protein sequence, read N- to C-terminus: Histidine ammonia-lyase (513 aa).

A cross-link (5-imidazolinone (Ala-Gly)) is located at residues 142–144 (ASG). 2,3-didehydroalanine (Ser) is present on Ser-143.

It belongs to the PAL/histidase family. Post-translationally, contains an active site 4-methylidene-imidazol-5-one (MIO), which is formed autocatalytically by cyclization and dehydration of residues Ala-Ser-Gly.

It localises to the cytoplasm. It catalyses the reaction L-histidine = trans-urocanate + NH4(+). It functions in the pathway amino-acid degradation; L-histidine degradation into L-glutamate; N-formimidoyl-L-glutamate from L-histidine: step 1/3. The polypeptide is Histidine ammonia-lyase (Roseobacter denitrificans (strain ATCC 33942 / OCh 114) (Erythrobacter sp. (strain OCh 114))).